The following is a 374-amino-acid chain: MAPASITTTTTVARRIVGSRRRTKATSPPDSPPPKKLKPISEILAKAQYAVVERADYGDVSCMQCGSGERAEELLLCDKCDKGFHMKCVRPIVVRVPIGSWLCPKCSGQRRVRRLSQRKIIDFFRIQKCNHKTDKCSSPQDIRKHRRRSGSLVYQKRRRRLLPFVSSEDPAQRLKQMGTLASALTELQMEFSDDLTYSSGMAPRSANQARFEEGGMQVLTKEDIETLEQCRAMCKRGDCPPLLVVFDSREGFTVEADGQIKDMTFIAEYTGDVDYIRNREHDDCDSMMTLLLAKDPSKSLVICPDKRGNIARFISGINNHTLDGKKKQNCKCVRYSVNGECRVFLVATRDIAKGERLYYDYNGYEHEYPTQHFV.

The N-terminal 46 residues, 1–46, are a transit peptide targeting the chloroplast; it reads MAPASITTTTTVARRIVGSRRRTKATSPPDSPPPKKLKPISEILAK. The interval 16 to 38 is disordered; the sequence is IVGSRRRTKATSPPDSPPPKKLK. A PHD-type zinc finger spans residues 59-109; the sequence is DVSCMQCGSGERAEELLLCDKCDKGFHMKCVRPIVVRVPIGSWLCPKCSGQ. Met216 lines the substrate pocket. The SET domain occupies 240–362; the sequence is PPLLVVFDSR…KGERLYYDYN (123 aa). Residues 250–252 and 312–316 each bind S-adenosyl-L-methionine; these read EGF and RFISG. Substrate is bound by residues Arg334 and 364-365; that span reads YE. Residues Tyr368 and Val374 each contribute to the S-adenosyl-L-methionine site.

The protein belongs to the class V-like SAM-binding methyltransferase superfamily. Homodimer.

It localises to the plastid. It is found in the chloroplast. The protein resides in the nucleus. It carries out the reaction L-lysyl(27)-[histone H3] + S-adenosyl-L-methionine = N(6)-methyl-L-lysyl(27)-[histone H3] + S-adenosyl-L-homocysteine + H(+). Histone methyltransferase that specifically monomethylates 'Lys-27' of histone H3 (H3K27me1). Has much higher activity on nucleosomes containing H3.1 than H3.3. Involved in the formation of constitutive heterochromatin and the silencing of heterochromatic elements. The protein is Probable Histone-lysine N-methyltransferase ATXR5 (ATXR5) of Ricinus communis (Castor bean).